Consider the following 213-residue polypeptide: MKPEFWQDRWNKDQIGWHQKSANPHLVKYWPTLNISQGSTVIVPLCGKSLDMRWLEGLGYNVLGVELSEKACKQYFDQMELEPKVSKNASGKFTIYEAGNTQIWCGDLFDLDADDVKYVSALYDRASVIALPPDMRERYAAHLGALIPDPQGLIITLDYDQSKMNGPPHAVSDAEVQRLFGTNWKLTLLEEVDKKDMFKEEGIEPVERVYKLN.

4 residues coordinate S-adenosyl-L-methionine: W10, L45, E66, and R125.

Belongs to the class I-like SAM-binding methyltransferase superfamily. TPMT family.

The protein resides in the cytoplasm. The catalysed reaction is S-adenosyl-L-methionine + a thiopurine = S-adenosyl-L-homocysteine + a thiopurine S-methylether.. This chain is Probable thiopurine S-methyltransferase, found in Yarrowia lipolytica (strain CLIB 122 / E 150) (Yeast).